The sequence spans 322 residues: Biotin synthase (322 aa).

The 228-residue stretch at N39–R266 folds into the Radical SAM core domain. [4Fe-4S] cluster-binding residues include C54, C58, and C61. Residues C98, C129, C189, and R261 each coordinate [2Fe-2S] cluster.

This sequence belongs to the radical SAM superfamily. Biotin synthase family. In terms of assembly, homodimer. It depends on [4Fe-4S] cluster as a cofactor. The cofactor is [2Fe-2S] cluster.

It carries out the reaction (4R,5S)-dethiobiotin + (sulfur carrier)-SH + 2 reduced [2Fe-2S]-[ferredoxin] + 2 S-adenosyl-L-methionine = (sulfur carrier)-H + biotin + 2 5'-deoxyadenosine + 2 L-methionine + 2 oxidized [2Fe-2S]-[ferredoxin]. It participates in cofactor biosynthesis; biotin biosynthesis; biotin from 7,8-diaminononanoate: step 2/2. Catalyzes the conversion of dethiobiotin (DTB) to biotin by the insertion of a sulfur atom into dethiobiotin via a radical-based mechanism. In Vesicomyosocius okutanii subsp. Calyptogena okutanii (strain HA), this protein is Biotin synthase.